The chain runs to 147 residues: D-aminoacyl-tRNA deacylase (147 aa).

The short motif at 139-140 (GP) is the Gly-cisPro motif, important for rejection of L-amino acids element.

The protein belongs to the DTD family. In terms of assembly, homodimer.

The protein resides in the cytoplasm. The enzyme catalyses glycyl-tRNA(Ala) + H2O = tRNA(Ala) + glycine + H(+). The catalysed reaction is a D-aminoacyl-tRNA + H2O = a tRNA + a D-alpha-amino acid + H(+). An aminoacyl-tRNA editing enzyme that deacylates mischarged D-aminoacyl-tRNAs. Also deacylates mischarged glycyl-tRNA(Ala), protecting cells against glycine mischarging by AlaRS. Acts via tRNA-based rather than protein-based catalysis; rejects L-amino acids rather than detecting D-amino acids in the active site. By recycling D-aminoacyl-tRNA to D-amino acids and free tRNA molecules, this enzyme counteracts the toxicity associated with the formation of D-aminoacyl-tRNA entities in vivo and helps enforce protein L-homochirality. The polypeptide is D-aminoacyl-tRNA deacylase (Rippkaea orientalis (strain PCC 8801 / RF-1) (Cyanothece sp. (strain PCC 8801))).